We begin with the raw amino-acid sequence, 175 residues long: uncharacterized protein (175 aa).

This is an uncharacterized protein from Acanthamoeba polyphaga mimivirus (APMV).